The primary structure comprises 298 residues: Glyoxalase domain-containing protein 4 (298 aa).

One can recognise a VOC 1 domain in the interval 5–130; that stretch reads RALHFVFKVK…GGYKFYLQDR (126 aa). Lys109 carries the N6-succinyllysine modification. The residue at position 131 (Ser131) is a Phosphoserine. Residues 137 to 258 form the VOC 2 domain; sequence PVLKVTLAVS…DGHEICFVGD (122 aa). Lys273 is subject to N6-succinyllysine.

The protein belongs to the glyoxalase I family. Interacts with NUDT9.

It is found in the mitochondrion. The chain is Glyoxalase domain-containing protein 4 (Glod4) from Mus musculus (Mouse).